The sequence spans 377 residues: L-arabinitol 4-dehydrogenase (377 aa).

Residues cysteine 66, histidine 91, glutamate 92, cysteine 121, cysteine 124, cysteine 127, cysteine 135, and glutamate 176 each contribute to the Zn(2+) site. NAD(+)-binding positions include proline 203–isoleucine 204, aspartate 224, arginine 229, isoleucine 296, and glutamine 320–arginine 322.

It belongs to the zinc-containing alcohol dehydrogenase family. In terms of assembly, homotetramer. Zn(2+) serves as cofactor. Post-translationally, the N-terminus is blocked.

It carries out the reaction L-arabinitol + NAD(+) = L-xylulose + NADH + H(+). The protein operates within carbohydrate degradation; L-arabinose degradation via L-arabinitol; D-xylulose 5-phosphate from L-arabinose (fungal route): step 2/5. Its function is as follows. Catalyzes the NAD-dependent oxidation of L-arabinitol to L-xylulose in the fungal L-arabinose catabolic pathway. L-arabinose catabolism is important for using plant material as a carbon source. Can partially compensate for xylitol dehydrogenase in xdh1 mutants. Also oxidizes galactitol to L-xylo-3-hexulose as an alternative to the standard Leloir pathway for D-galactose metabolism. NADP cannot act as a cosubstrate. In Hypocrea jecorina (Trichoderma reesei), this protein is L-arabinitol 4-dehydrogenase (lad1).